The chain runs to 154 residues: Putative F-box protein At2g11200 (154 aa).

Residues 5-51 (TTAMSDLPRDLEEEVLSRVQLASLRAVRTTCKKWNRRLSKYRFTKKY) form the F-box domain.

This is Putative F-box protein At2g11200 from Arabidopsis thaliana (Mouse-ear cress).